The following is a 21-amino-acid chain: Natriuretic peptide TsNP (21 aa).

A disulfide bond links cysteine 5 and cysteine 21.

In terms of tissue distribution, expressed by the venom gland.

Its subcellular location is the secreted. Functionally, scorpion venom natriuretic peptide that increases the perfusion pressure, glomerular filtration rate and urinary flow in the isolated perfused rat kidney assay. Induces a decrease of the percentages of renal transport for sodium, potassium and chloride and an increase of the urinary cGMP concentration. Also down-regulates the mRNA expression of natriuretic peptide receptor 1 (NPR1) in the kidneys whereas it up-regulates those of NPR2, NPR3 and guanylyl cyclase C (GUCY2C) mRNAs. May exhibit hypotensive and vasodepressor activities. This chain is Natriuretic peptide TsNP, found in Tityus serrulatus (Brazilian scorpion).